The following is a 360-amino-acid chain: Phospho-N-acetylmuramoyl-pentapeptide-transferase (360 aa).

10 helical membrane passes run 27–47 (GAFL…INVL), 69–89 (VGTP…STLM), 93–113 (WDNP…LIGF), 134–154 (LLLG…NHPA), 168–188 (VLLN…VGAA), 199–219 (GLAI…AYAV), 239–259 (ILIF…YNAP), 262–282 (AVFM…AIAI), 288–308 (LVLA…IIQV), and 337–357 (TIVI…LATL).

The protein belongs to the glycosyltransferase 4 family. MraY subfamily. The cofactor is Mg(2+).

The protein resides in the cell inner membrane. It catalyses the reaction UDP-N-acetyl-alpha-D-muramoyl-L-alanyl-gamma-D-glutamyl-meso-2,6-diaminopimeloyl-D-alanyl-D-alanine + di-trans,octa-cis-undecaprenyl phosphate = di-trans,octa-cis-undecaprenyl diphospho-N-acetyl-alpha-D-muramoyl-L-alanyl-D-glutamyl-meso-2,6-diaminopimeloyl-D-alanyl-D-alanine + UMP. It participates in cell wall biogenesis; peptidoglycan biosynthesis. Its function is as follows. Catalyzes the initial step of the lipid cycle reactions in the biosynthesis of the cell wall peptidoglycan: transfers peptidoglycan precursor phospho-MurNAc-pentapeptide from UDP-MurNAc-pentapeptide onto the lipid carrier undecaprenyl phosphate, yielding undecaprenyl-pyrophosphoryl-MurNAc-pentapeptide, known as lipid I. This chain is Phospho-N-acetylmuramoyl-pentapeptide-transferase, found in Ruegeria sp. (strain TM1040) (Silicibacter sp.).